A 165-amino-acid polypeptide reads, in one-letter code: Thiol peroxidase (165 aa).

The Thioredoxin domain maps to 18-164 (RKVGDKAPNF…YEAAIEAAKK (147 aa)). The Cysteine sulfenic acid (-SOH) intermediate role is filled by C60. C60 and C94 are oxidised to a cystine.

Belongs to the peroxiredoxin family. Tpx subfamily. As to quaternary structure, homodimer.

The enzyme catalyses a hydroperoxide + [thioredoxin]-dithiol = an alcohol + [thioredoxin]-disulfide + H2O. In terms of biological role, thiol-specific peroxidase that catalyzes the reduction of hydrogen peroxide and organic hydroperoxides to water and alcohols, respectively. Plays a role in cell protection against oxidative stress by detoxifying peroxides. The polypeptide is Thiol peroxidase (Listeria monocytogenes serotype 4b (strain F2365)).